A 212-amino-acid polypeptide reads, in one-letter code: Large ribosomal subunit protein bL25 (212 aa).

The protein belongs to the bacterial ribosomal protein bL25 family. CTC subfamily. Part of the 50S ribosomal subunit; part of the 5S rRNA/L5/L18/L25 subcomplex. Contacts the 5S rRNA. Binds to the 5S rRNA independently of L5 and L18.

This is one of the proteins that binds to the 5S RNA in the ribosome where it forms part of the central protuberance. In Leptospira interrogans serogroup Icterohaemorrhagiae serovar copenhageni (strain Fiocruz L1-130), this protein is Large ribosomal subunit protein bL25.